The following is a 564-amino-acid chain: Dihydroxy-acid dehydratase (564 aa).

Residue Cys-53 coordinates [2Fe-2S] cluster. Asp-85 is a binding site for Mg(2+). Cys-126 serves as a coordination point for [2Fe-2S] cluster. Mg(2+) is bound by residues Asp-127 and Lys-128. Lys-128 carries the N6-carboxylysine modification. Cys-203 is a [2Fe-2S] cluster binding site. Glu-454 contributes to the Mg(2+) binding site. Ser-480 functions as the Proton acceptor in the catalytic mechanism.

The protein belongs to the IlvD/Edd family. As to quaternary structure, homodimer. Requires [2Fe-2S] cluster as cofactor. Mg(2+) serves as cofactor.

The catalysed reaction is (2R)-2,3-dihydroxy-3-methylbutanoate = 3-methyl-2-oxobutanoate + H2O. The enzyme catalyses (2R,3R)-2,3-dihydroxy-3-methylpentanoate = (S)-3-methyl-2-oxopentanoate + H2O. Its pathway is amino-acid biosynthesis; L-isoleucine biosynthesis; L-isoleucine from 2-oxobutanoate: step 3/4. It participates in amino-acid biosynthesis; L-valine biosynthesis; L-valine from pyruvate: step 3/4. In terms of biological role, functions in the biosynthesis of branched-chain amino acids. Catalyzes the dehydration of (2R,3R)-2,3-dihydroxy-3-methylpentanoate (2,3-dihydroxy-3-methylvalerate) into 2-oxo-3-methylpentanoate (2-oxo-3-methylvalerate) and of (2R)-2,3-dihydroxy-3-methylbutanoate (2,3-dihydroxyisovalerate) into 2-oxo-3-methylbutanoate (2-oxoisovalerate), the penultimate precursor to L-isoleucine and L-valine, respectively. In Mycobacterium ulcerans (strain Agy99), this protein is Dihydroxy-acid dehydratase.